The chain runs to 442 residues: Exodeoxyribonuclease 7 large subunit (442 aa).

It belongs to the XseA family. Heterooligomer composed of large and small subunits.

It is found in the cytoplasm. The enzyme catalyses Exonucleolytic cleavage in either 5'- to 3'- or 3'- to 5'-direction to yield nucleoside 5'-phosphates.. Bidirectionally degrades single-stranded DNA into large acid-insoluble oligonucleotides, which are then degraded further into small acid-soluble oligonucleotides. This chain is Exodeoxyribonuclease 7 large subunit, found in Shewanella loihica (strain ATCC BAA-1088 / PV-4).